Consider the following 440-residue polypeptide: uncharacterized protein (440 aa).

A run of 12 helical transmembrane segments spans residues 24–44 (VVIG…APAA), 47–67 (AGSG…CNAI), 93–113 (FWGY…CAAM), 117–137 (VGFY…VVAL), 155–175 (IVAV…GSGA), 183–203 (IGVD…FFAF), 229–249 (LALG…IAVL), 276–296 (VVQI…ILGV), 323–343 (PFRA…TADI), 346–366 (AIGF…ASAL), 379–399 (IPLV…LSSV), and 400–420 (AAGA…RIIT).

It belongs to the amino acid-polyamine-organocation (APC) superfamily.

Its subcellular location is the cell membrane. Probable amino-acid or metabolite transport protein. This is an uncharacterized protein from Mycobacterium bovis (strain ATCC BAA-935 / AF2122/97).